The chain runs to 166 residues: NAD(P)H-quinone oxidoreductase subunit I, chloroplastic (166 aa).

4Fe-4S ferredoxin-type domains lie at 55-84 (GRIHFEFDKCIACEVCVRVCPIDLPVVDWK) and 95-124 (LNYSIDFGICIFCGNCVEYCPTNCLSMTEE). [4Fe-4S] cluster is bound by residues cysteine 64, cysteine 67, cysteine 70, cysteine 74, cysteine 104, cysteine 107, cysteine 110, and cysteine 114.

The protein belongs to the complex I 23 kDa subunit family. NDH is composed of at least 16 different subunits, 5 of which are encoded in the nucleus. [4Fe-4S] cluster serves as cofactor.

The protein resides in the plastid. The protein localises to the chloroplast thylakoid membrane. It carries out the reaction a plastoquinone + NADH + (n+1) H(+)(in) = a plastoquinol + NAD(+) + n H(+)(out). The catalysed reaction is a plastoquinone + NADPH + (n+1) H(+)(in) = a plastoquinol + NADP(+) + n H(+)(out). Functionally, NDH shuttles electrons from NAD(P)H:plastoquinone, via FMN and iron-sulfur (Fe-S) centers, to quinones in the photosynthetic chain and possibly in a chloroplast respiratory chain. The immediate electron acceptor for the enzyme in this species is believed to be plastoquinone. Couples the redox reaction to proton translocation, and thus conserves the redox energy in a proton gradient. This chain is NAD(P)H-quinone oxidoreductase subunit I, chloroplastic, found in Stevia rebaudiana (Stevia).